A 49-amino-acid chain; its full sequence is Chitin-binding lectin (49 aa).

One can recognise a Chitin-binding type-1 domain in the interval 2-45; it reads DHRCGREATPPGKLCNDGRCCSQWGWCGTTQAYCSGKCQSQCDC. 4 cysteine pairs are disulfide-bonded: Cys5-Cys22, Cys16-Cys28, Cys21-Cys35, and Cys39-Cys43.

As to quaternary structure, homodimer; disulfide-linked.

In terms of biological role, chitin-binding lectin which is specific for N-acetylglucosamine oligomers. The polypeptide is Chitin-binding lectin (Viscum album (European mistletoe)).